A 398-amino-acid polypeptide reads, in one-letter code: MSNKLVLVLNCGSSSLKFAIIDALTGDDQISGLAECFGLEDSRIKWKVDGNKFESKLGAFTAHREAVEFIVKEILGQYPDVAAQIQAIGHRVVHGGEKFTHSVVIDDSVIAGIEDCAALAPLHNPAHLIGIRAAQASFPGLPQVAVFDTAFHQTMPERAFVYALPYKLYREHGIRRYGMHGTSHLFVSREAAKALGKELADTNVICAHLGNGASVTAVKGGKSVDTSMGLTPLEGLVMGTRCGDIDPSIIYHLVDRLGYTLDEVNNLMNKQSGLLGISELTNDCRGIEEGYAEGHKGATLALEIFCYRLAKYIASYTVPLGRLDALVFTGGIGENSDLIREKVLNLLAIFNFEVDPARNQAARFGNQGQITTDNGPVAMVIPTNEEWVIAEDAVSLLK.

Residue Asn-10 participates in Mg(2+) binding. Lys-17 is an ATP binding site. Arg-91 lines the substrate pocket. Asp-148 (proton donor/acceptor) is an active-site residue. Residues 208-212 (HLGNG), 283-285 (DCR), and 331-335 (GIGEN) each bind ATP. Glu-385 serves as a coordination point for Mg(2+).

It belongs to the acetokinase family. As to quaternary structure, homodimer. Requires Mg(2+) as cofactor. The cofactor is Mn(2+).

The protein localises to the cytoplasm. The catalysed reaction is acetate + ATP = acetyl phosphate + ADP. It participates in metabolic intermediate biosynthesis; acetyl-CoA biosynthesis; acetyl-CoA from acetate: step 1/2. Catalyzes the formation of acetyl phosphate from acetate and ATP. Can also catalyze the reverse reaction. In Shewanella loihica (strain ATCC BAA-1088 / PV-4), this protein is Acetate kinase.